The primary structure comprises 658 residues: Sodium/nucleoside cotransporter 1 (658 aa).

Over 1 to 75 (MEKASGRKSL…ARTFCQRHAS (75 aa)) the chain is Cytoplasmic. Residues 76-99 (LFKKILLGLLCLAYAAYFLAACIL) form a helical membrane-spanning segment. At 100–104 (DFQRA) the chain is on the extracellular side. The chain crosses the membrane as a helical span at residues 105-123 (LALFVITCLVILVLLLHFL). Over 124 to 142 (KKFLGKKLTRCLKPFKNSQ) the chain is Cytoplasmic. A helical membrane pass occupies residues 143 to 162 (LRLWIKRVFAGVSLVGLILW). At 163–173 (LALDTAQRPEQ) the chain is on the extracellular side. The chain crosses the membrane as a helical span at residues 174–190 (LISFAGICMFVLILFAC). Over 191–196 (SKHHSA) the chain is Cytoplasmic. The helical transmembrane segment at 197 to 217 (VSWRTVFWGLGLQFVFGLLVI) threads the bilayer. At 218-256 (RTDPGFIAFQWLGDQVQIFLAYTVAGSSFVLGDTLVNDV) the chain is on the extracellular side. Residues 257–278 (FAFQSLPIIIFFGCVMSILYYL) form a helical membrane-spanning segment. The Cytoplasmic segment spans residues 279–289 (GLVQWVVQKIA). Residues 290–313 (WFLQVTMRTTATETLAVAGNIFVG) traverse the membrane as a helical segment. Residues 314–332 (MTEAPLLIRPYLADLTLSE) lie on the Extracellular side of the membrane. Residues 333–355 (IHAVMTSGFATISGTVLGAFISF) form a helical membrane-spanning segment. Topologically, residues 356–361 (GIDASS) are cytoplasmic. Residues 362–381 (LISASVMGAPCALALSKLVY) form a helical membrane-spanning segment. Residues 382-418 (PEEEESKFKSKEGVKLPRGKESNVLEAASNGATDAIA) are Extracellular-facing. Residues 419–441 (LVANVAANLVAFLAVLAFINAAL) traverse the membrane as a helical segment. Topologically, residues 442–452 (SWLGELVDIQG) are cytoplasmic. Residues 453–474 (LTFQVICSYILRPMVYMMGVEW) traverse the membrane as a helical segment. Over 475-529 (TDCPMVAEMVGIKFFTNEFVAYQQLSQYKKKRLSGMEEWIDGQKQWISVRAEVIT) the chain is Extracellular. Residues 530 to 553 (TFSLCGFANLSSIGITLGGLTSMV) form a helical membrane-spanning segment. Residues 554–564 (PHRKSDLSKVV) lie on the Cytoplasmic side of the membrane. A helical transmembrane segment spans residues 565 to 587 (IRALFTGSCVSFISACVAGILYV). At 588 to 658 (PRGAETDCVS…CGFYNNTVCA (71 aa)) the chain is on the extracellular side. A glycan (N-linked (GlcNAc...) asparagine) is linked at asparagine 653.

It belongs to the concentrative nucleoside transporter (CNT) (TC 2.A.41) family. Post-translationally, N-glycosylated. N-glycosylation is required for localization to the plasma membrane and the transporter activity.

Its subcellular location is the cell membrane. It localises to the apical cell membrane. It carries out the reaction uridine(out) + Na(+)(out) = uridine(in) + Na(+)(in). The catalysed reaction is thymidine(out) + Na(+)(out) = thymidine(in) + Na(+)(in). It catalyses the reaction cytidine(out) + Na(+)(out) = cytidine(in) + Na(+)(in). The enzyme catalyses adenosine(out) + Na(+)(out) = adenosine(in) + Na(+)(in). With respect to regulation, due to its high apparent affinity but slow transport, adenosine could act as a negative regulator of pyrimidine transport under some conditions. Its function is as follows. Sodium and pyrimidine nucleoside symporter of the plasma membrane that imports uridine, thymidine and cytidine into cells by coupling their transport to the transmembrane sodium electrochemical gradient. Also transports adenosine, an atypical substrate transported with high apparent affinity, but low maximum velocity. Therefore, exhibits the transport characteristics of the nucleoside transport system cit or N2 subtype (N2/cit). Involved in renal nucleoside (re)absorption. This chain is Sodium/nucleoside cotransporter 1 (SLC28A1), found in Oryctolagus cuniculus (Rabbit).